A 419-amino-acid chain; its full sequence is Serine hydroxymethyltransferase (419 aa).

Residues leucine 121 and 125–127 (GHL) contribute to the (6S)-5,6,7,8-tetrahydrofolate site. Lysine 229 carries the post-translational modification N6-(pyridoxal phosphate)lysine. 354-356 (SPF) lines the (6S)-5,6,7,8-tetrahydrofolate pocket.

The protein belongs to the SHMT family. Homodimer. Pyridoxal 5'-phosphate serves as cofactor.

It is found in the cytoplasm. It carries out the reaction (6R)-5,10-methylene-5,6,7,8-tetrahydrofolate + glycine + H2O = (6S)-5,6,7,8-tetrahydrofolate + L-serine. The protein operates within one-carbon metabolism; tetrahydrofolate interconversion. It participates in amino-acid biosynthesis; glycine biosynthesis; glycine from L-serine: step 1/1. Functionally, catalyzes the reversible interconversion of serine and glycine with tetrahydrofolate (THF) serving as the one-carbon carrier. This reaction serves as the major source of one-carbon groups required for the biosynthesis of purines, thymidylate, methionine, and other important biomolecules. Also exhibits THF-independent aldolase activity toward beta-hydroxyamino acids, producing glycine and aldehydes, via a retro-aldol mechanism. The polypeptide is Serine hydroxymethyltransferase (Coxiella burnetii (strain RSA 331 / Henzerling II)).